A 155-amino-acid chain; its full sequence is Small ribosomal subunit protein uS9 (155 aa).

Belongs to the universal ribosomal protein uS9 family.

The protein is Small ribosomal subunit protein uS9 of Rhizobium etli (strain ATCC 51251 / DSM 11541 / JCM 21823 / NBRC 15573 / CFN 42).